We begin with the raw amino-acid sequence, 264 residues long: MSGQDLVTLNVGGRIFTTRPSTLKQFPASRLAGMLDGRDQEFKTVDGQIFVDRDGALFSFILDFLRNHELLLPSDFADHHRLQREALFYELDSLVDLLSQFLLQSRSAVMEVHFLNQNTQAFFRVFGSCSKTIEMLSGRITMFVERPTALTGNRNSPLALPPQRPSHHDLLFHCGSDGAAENQAGVRYISIKPDNRKLANGTNVLGLLVDTLLKEGFHLVSTRTPASGEKSECYVFERITTPQVLGMSKTPKSETTTMPAPSQK.

Residues 5 to 74 (DLVTLNVGGR…LRNHELLLPS (70 aa)) enclose the BTB domain.

Can form homooligomers. Interacts with KCNA1 (via cytoplasmic N-terminal domain) and KCNA4.

It is found in the endoplasmic reticulum. Inhibits potassium fluxes in cells. May regulate Kv1 family channel proteins by retaining a fraction of channels in endomembranes. The chain is Potassium channel regulatory protein (Kcnrg) from Mus musculus (Mouse).